We begin with the raw amino-acid sequence, 89 residues long: MSIAAERKAEVIKTSANKPGDTGSPEVQVAILSERIANLTAHFKIHTKDNHSRRGLLKLVSTRRSLLDYVKKKDEARYKALLEKHGIRR.

A compositionally biased stretch (basic and acidic residues) spans 1 to 11 (MSIAAERKAEV). A disordered region spans residues 1–25 (MSIAAERKAEVIKTSANKPGDTGSP).

The protein belongs to the universal ribosomal protein uS15 family. In terms of assembly, part of the 30S ribosomal subunit. Forms a bridge to the 50S subunit in the 70S ribosome, contacting the 23S rRNA.

One of the primary rRNA binding proteins, it binds directly to 16S rRNA where it helps nucleate assembly of the platform of the 30S subunit by binding and bridging several RNA helices of the 16S rRNA. In terms of biological role, forms an intersubunit bridge (bridge B4) with the 23S rRNA of the 50S subunit in the ribosome. In Nitrobacter winogradskyi (strain ATCC 25391 / DSM 10237 / CIP 104748 / NCIMB 11846 / Nb-255), this protein is Small ribosomal subunit protein uS15.